Here is a 167-residue protein sequence, read N- to C-terminus: Transcription antitermination protein NusB (167 aa).

The interval 1-32 (MSDTPETGKPAAGTKPAARTEAKAPPKSARRR) is disordered.

It belongs to the NusB family.

Involved in transcription antitermination. Required for transcription of ribosomal RNA (rRNA) genes. Binds specifically to the boxA antiterminator sequence of the ribosomal RNA (rrn) operons. In Cupriavidus pinatubonensis (strain JMP 134 / LMG 1197) (Cupriavidus necator (strain JMP 134)), this protein is Transcription antitermination protein NusB.